A 305-amino-acid chain; its full sequence is MESIVDKQAVKHFLLQLQDKICQQLEATDGQAQFIEDAWQREPGEKLGGGGRTRVMREGAVFEQGGVNFSHVFGEQMPASATAHRPELAGRRFEAMGVSLVMHPKNPYVPTSHANVRFFIAEKEGEAPIWWFGGGFDLTPFYPFVEDGQHWHQTAKNICAPFGSEIYNEHKAWCDRYFYLPHRNETRGIGGLFFDDLNEWSFEQCFAYMQAVGEGYTQAYVPIVEKRKNTPFTERERQFQLYRRGRYVEFNLVLDRGTLFGLQTGGRTESILMSMPPLARWEYAYQPQAGTPEAKLSEFLVPREW.

Position 99 (Ser-99) interacts with substrate. His-103 and His-113 together coordinate a divalent metal cation. His-113 acts as the Proton donor in catalysis. 115–117 lines the substrate pocket; the sequence is NVR. Residues His-152 and His-182 each contribute to the a divalent metal cation site. An important for dimerization region spans residues 247 to 282; the sequence is YVEFNLVLDRGTLFGLQTGGRTESILMSMPPLARWE. 265–267 provides a ligand contact to substrate; it reads GGR.

The protein belongs to the aerobic coproporphyrinogen-III oxidase family. Homodimer. Requires a divalent metal cation as cofactor.

Its subcellular location is the cytoplasm. It catalyses the reaction coproporphyrinogen III + O2 + 2 H(+) = protoporphyrinogen IX + 2 CO2 + 2 H2O. It participates in porphyrin-containing compound metabolism; protoporphyrin-IX biosynthesis; protoporphyrinogen-IX from coproporphyrinogen-III (O2 route): step 1/1. Involved in the heme biosynthesis. Catalyzes the aerobic oxidative decarboxylation of propionate groups of rings A and B of coproporphyrinogen-III to yield the vinyl groups in protoporphyrinogen-IX. The polypeptide is Oxygen-dependent coproporphyrinogen-III oxidase (Vibrio cholerae serotype O1 (strain ATCC 39541 / Classical Ogawa 395 / O395)).